A 158-amino-acid polypeptide reads, in one-letter code: MASVEKVPMLAEGYEKLTAQLAALKAERPLIVDAIEEARAHGDLSENAEYHAAKERQGQVEATIGDLEDKLSRAQVIDPTTLSGDRIVFGATVTLTDEDDKPVKYQIVGQAEADAKAGKISYNSPLGRALIGRRVDDEIEVTVPSGDKYYLVTKIEFI.

A coiled-coil region spans residues Ala53 to Gln75.

This sequence belongs to the GreA/GreB family.

Functionally, necessary for efficient RNA polymerase transcription elongation past template-encoded arresting sites. The arresting sites in DNA have the property of trapping a certain fraction of elongating RNA polymerases that pass through, resulting in locked ternary complexes. Cleavage of the nascent transcript by cleavage factors such as GreA or GreB allows the resumption of elongation from the new 3'terminus. GreA releases sequences of 2 to 3 nucleotides. The chain is Transcription elongation factor GreA from Sphingopyxis alaskensis (strain DSM 13593 / LMG 18877 / RB2256) (Sphingomonas alaskensis).